A 182-amino-acid chain; its full sequence is Caltractin ICL1b (182 aa).

The disordered stretch occupies residues 1–31 (MSRRGQQPPPQQQQAPPQKNQAGKFNPAEFV). EF-hand domains are found at residues 38–73 (EEVL…LGFE), 74–109 (AKNQ…RISE), 111–146 (DSKA…LGET), and 147–182 (MDDS…KTFA). The Ca(2+) site is built by D51, D53, T55, S57, E62, D87, D89, S91, Q93, and E98.

Belongs to the centrin family.

The protein localises to the cytoplasm. Its subcellular location is the cytoskeleton. In terms of biological role, plays a fundamental role in microtubule organizing center structure and function. Component of the infraciliary lattice (ICL) and the ciliary basal bodies. The polypeptide is Caltractin ICL1b (Icl1b) (Paramecium tetraurelia).